A 289-amino-acid chain; its full sequence is tRNA acetyltransferase TAN1 (289 aa).

Positions 1–10 are enriched in basic and acidic residues; sequence MGEKRNRNGK. 2 disordered regions span residues 1–31 and 64–83; these read MGEK…DPGT and DIKE…LSIE. S72 is subject to Phosphoserine. Residues 146-259 enclose the THUMP domain; sequence ADPKNMVKRT…KSNIGMCVVD (114 aa).

It is found in the cytoplasm. It localises to the nucleus. In terms of biological role, probable tRNA acetyltransferase required for the formation of the modified nucleoside N(4)-acetylcytidine in serine and leucine tRNAs. Binds RNA. This is tRNA acetyltransferase TAN1 (TAN1) from Saccharomyces cerevisiae (strain ATCC 204508 / S288c) (Baker's yeast).